The sequence spans 1224 residues: MSILSENNPTPTSITDPNESSHLHNPELNSGTRVASGPGPGPEVESTPLAPPTEVMNTTSANTSSLSLGSPMHEKIKQFDQDEVDTGETNDRTIDSGSGDIDDSQQSHNNNNNESNPESSEADDEKTQGMPPRMPGTFNVKGLHQGDDSDNEKQYTELTKSINKRTSKDSYSLGTLESPGTLNALETNNVSPAVIEEEQHTSSLEDLSLSLQHQNENARLSAPRSAPPQVPTSKTSSFHDMSSVISSSTSVHKIPSNPTSTRGSHLSSYKSTLDPGKPAQAAAPPPPEIDIDNLLTKSELDSETDTLSSATNSPNLLRNDTLQGIPTRDDENIDDSPRQLSQNTSATSRNTSGTSTSTVVKNSRSGTSKSTSTSTAHNQTAAITPIIPSHNKFHQQVINTNATNSSSSLEPLGVGINSNSSPKSGKKRKSGSKVRGVFSSMFGKNKSTSSSSSSNSGSNSHSQEVNIKISTPFNAKHLAHVGIDDNGSYTGLPIEWERLLSASGITKKEQQQHPQAVMDIVAFYQDTSENPDDAAFKKFHFDNNKSSSSGWSNENTPPATPGGSNSGSGSGGGGAPSSPHRTPPSSIIEKNNVEQKVITPSQSMPTKTESKQSENQHPHEDNATQYTPRTPTSHVQEGQFIPSRPAPKPPSTPLSSMSVSHKTPSSQSLPRSDSQSDIRSSTPKSHQDVSPSKIKIRSISSKSLKSMRSRKSGDKFTHIAPAPPPPSLPSIPKSKSHSASLSSQLRPATNGSTTAPIPASAAFGGENNALPKQRINEFKAHRAPPPPPSAPPAPPVPPAPPANLLSEQTSEIPQQRTAPSQALADVTAPTNIYEIQQTKYQEAQQKLREKKARELEEIQRLREKNERQNRQQETGQNNADTASGGSNIAPPVPVPNKKPPSGSGGGRDAKQAALIAQKKREEKKRKNLQIIAKLKTICNPGDPNELYVDLVKIGQGASGGVFLAHDVRDKSNIVAIKQMNLEQQPKKELIINEILVMKGSSHPNIVNFIDSYLLKGDLWVIMEYMEGGSLTDIVTHSVMTEGQIGVVCRETLKGLKFLHSKGVIHRDIKSDNILLNMDGNIKITDFGFCAQINEINSKRITMVGTPYWMAPEIVSRKEYGPKVDVWSLGIMIIEMLEGEPPYLNETPLRALYLIATNGTPKLKDPESLSYDIRKFLAWCLQVDFNKRADADELLHDNFITECDDVSSLSPLVKIARLKKMSESD.

The span at 1–18 (MSILSENNPTPTSITDPN) shows a compositional bias: polar residues. Disordered stretches follow at residues 1–378 (MSIL…TAHN) and 403–464 (TNSS…HSQE). Composition is skewed to low complexity over residues 57 to 70 (NTTSANTSSLSLGS) and 95 to 119 (DSGSGDIDDSQQSHNNNNNESNPES). A compositionally biased stretch (basic and acidic residues) spans 144-155 (HQGDDSDNEKQY). Polar residues-rich tracts occupy residues 169–191 (DSYSLGTLESPGTLNALETNNVS), 201–218 (TSSLEDLSLSLQHQNENA), and 231–240 (PTSKTSSFHD). Over residues 242–251 (SSVISSSTSV) the composition is skewed to low complexity. 2 stretches are compositionally biased toward polar residues: residues 256-271 (SNPTSTRGSHLSSYKS) and 305-324 (DTLSSATNSPNLLRNDTLQG). Composition is skewed to low complexity over residues 343–375 (NTSATSRNTSGTSTSTVVKNSRSGTSKSTSTST) and 433–462 (KVRGVFSSMFGKNKSTSSSSSSNSGSNSHS). The region spanning 469 to 482 (ISTPFNAKHLAHVG) is the CRIB domain. Disordered regions lie at residues 539–825 (FHFD…ALAD) and 861–913 (LREK…KQAA). Polar residues predominate over residues 544 to 555 (NKSSSSGWSNEN). The span at 564–575 (SNSGSGSGGGGA) shows a compositional bias: gly residues. Positions 598-607 (ITPSQSMPTK) are enriched in polar residues. The span at 608–622 (TESKQSENQHPHEDN) shows a compositional bias: basic and acidic residues. The segment covering 623-636 (ATQYTPRTPTSHVQ) has biased composition (polar residues). Low complexity-rich tracts occupy residues 664–677 (PSSQSLPRSDSQSD), 690–704 (SPSKIKIRSISSKSL), and 730–743 (SIPKSKSHSASLSS). Positions 744–755 (QLRPATNGSTTA) are enriched in polar residues. The span at 783–801 (APPPPPSAPPAPPVPPAPP) shows a compositional bias: pro residues. Residues 805 to 820 (LSEQTSEIPQQRTAPS) are compositionally biased toward polar residues. Basic and acidic residues predominate over residues 861–870 (LREKNERQNR). The segment covering 871–886 (QQETGQNNADTASGGS) has biased composition (polar residues). The Protein kinase domain maps to 947-1199 (YVDLVKIGQG…ADELLHDNFI (253 aa)). ATP is bound by residues 953–961 (IGQGASGGV) and lysine 977. Catalysis depends on aspartate 1067, which acts as the Proton acceptor.

The protein belongs to the protein kinase superfamily. STE Ser/Thr protein kinase family. STE20 subfamily.

It is found in the cytoplasm. The protein resides in the nucleus. The catalysed reaction is L-seryl-[protein] + ATP = O-phospho-L-seryl-[protein] + ADP + H(+). The enzyme catalyses L-threonyl-[protein] + ATP = O-phospho-L-threonyl-[protein] + ADP + H(+). Its function is as follows. MAP4K component of the MAPK pathway required for the mating pheromone response, and the regulation of cell polarity and cell cycle. Phosphorylates histone H2B to form H2BS10ph. Required for hyphal formation and virulence. The polypeptide is Serine/threonine-protein kinase CST20 (CST20) (Candida albicans (strain WO-1) (Yeast)).